Here is a 305-residue protein sequence, read N- to C-terminus: GTPase Era (305 aa).

Residues 13–181 (RCGFVAIVGR…ESAVGRFLPE (169 aa)) form the Era-type G domain. A G1 region spans residues 21–28 (GRPNVGKS). A GTP-binding site is contributed by 21 to 28 (GRPNVGKS). The interval 47-51 (QTTRH) is G2. Residues 68 to 71 (DTPG) form a G3 region. GTP contacts are provided by residues 68 to 72 (DTPGM) and 130 to 133 (NKVD). Residues 130 to 133 (NKVD) form a G4 region. The tract at residues 160–162 (LSA) is G5. The 85-residue stretch at 204 to 288 (VREKITRQLG…MLRLWVKVKR (85 aa)) folds into the KH type-2 domain.

This sequence belongs to the TRAFAC class TrmE-Era-EngA-EngB-Septin-like GTPase superfamily. Era GTPase family. In terms of assembly, monomer.

The protein localises to the cytoplasm. The protein resides in the cell inner membrane. An essential GTPase that binds both GDP and GTP, with rapid nucleotide exchange. Plays a role in 16S rRNA processing and 30S ribosomal subunit biogenesis and possibly also in cell cycle regulation and energy metabolism. The polypeptide is GTPase Era (Marinobacter nauticus (strain ATCC 700491 / DSM 11845 / VT8) (Marinobacter aquaeolei)).